Reading from the N-terminus, the 88-residue chain is Translation initiation factor IF-1 3 (88 aa).

An S1-like domain is found at 1–72 (MAKEELLELD…TKGCINFRHK (72 aa)).

It belongs to the IF-1 family. As to quaternary structure, component of the 30S ribosomal translation pre-initiation complex which assembles on the 30S ribosome in the order IF-2 and IF-3, IF-1 and N-formylmethionyl-tRNA(fMet); mRNA recruitment can occur at any time during PIC assembly.

Its subcellular location is the cytoplasm. Its function is as follows. One of the essential components for the initiation of protein synthesis. Stabilizes the binding of IF-2 and IF-3 on the 30S subunit to which N-formylmethionyl-tRNA(fMet) subsequently binds. Helps modulate mRNA selection, yielding the 30S pre-initiation complex (PIC). Upon addition of the 50S ribosomal subunit IF-1, IF-2 and IF-3 are released leaving the mature 70S translation initiation complex. This Burkholderia orbicola (strain AU 1054) protein is Translation initiation factor IF-1 3.